The primary structure comprises 534 residues: Alkaline serine exoprotease A (534 aa).

The signal sequence occupies residues 1 to 21 (MLKKLLSCCITSALCFHSSLA). Residues 22 to 141 (FSQPNEIADS…LSLDPIVSAD (120 aa)) constitute a propeptide that is removed on maturation. One can recognise an Inhibitor I9 domain in the interval 57 to 134 (RYIVVFQQPQ…YIEQDRILSL (78 aa)). The Peptidase S8 domain maps to 148 to 419 (IWGLDRIDQR…KLLYSLTDAD (272 aa)). Residues D180, H213, and S363 each act as charge relay system in the active site. The disordered stretch occupies residues 423–442 (DCGGPDPTPDPEGKLTSGVP).

This sequence belongs to the peptidase S8 family.

The polypeptide is Alkaline serine exoprotease A (proA) (Vibrio alginolyticus).